The primary structure comprises 251 residues: Triosephosphate isomerase (251 aa).

Substrate is bound at residue 10–12 (NWK). Catalysis depends on histidine 95, which acts as the Electrophile. Glutamate 167 serves as the catalytic Proton acceptor. Residues glycine 173, serine 213, and 234–235 (GG) each bind substrate.

It belongs to the triosephosphate isomerase family. In terms of assembly, homodimer.

The protein localises to the cytoplasm. The catalysed reaction is D-glyceraldehyde 3-phosphate = dihydroxyacetone phosphate. Its pathway is carbohydrate biosynthesis; gluconeogenesis. It functions in the pathway carbohydrate degradation; glycolysis; D-glyceraldehyde 3-phosphate from glycerone phosphate: step 1/1. Involved in the gluconeogenesis. Catalyzes stereospecifically the conversion of dihydroxyacetone phosphate (DHAP) to D-glyceraldehyde-3-phosphate (G3P). The sequence is that of Triosephosphate isomerase from Acetivibrio thermocellus (strain ATCC 27405 / DSM 1237 / JCM 9322 / NBRC 103400 / NCIMB 10682 / NRRL B-4536 / VPI 7372) (Clostridium thermocellum).